Consider the following 214-residue polypeptide: Redox-sensing transcriptional repressor Rex (214 aa).

The H-T-H motif DNA-binding region spans 17–56 (LYYRIFKRFYADQVEKASSKQIADAMGIDSATVRRDFSYF). Position 91–96 (91–96 (GCGNIG)) interacts with NAD(+).

This sequence belongs to the transcriptional regulatory Rex family. As to quaternary structure, homodimer.

It is found in the cytoplasm. In terms of biological role, modulates transcription in response to changes in cellular NADH/NAD(+) redox state. The chain is Redox-sensing transcriptional repressor Rex from Streptococcus equi subsp. zooepidemicus (strain H70).